Consider the following 305-residue polypeptide: Ribosomal RNA large subunit methyltransferase F (305 aa).

It belongs to the methyltransferase superfamily. METTL16/RlmF family.

It localises to the cytoplasm. It catalyses the reaction adenosine(1618) in 23S rRNA + S-adenosyl-L-methionine = N(6)-methyladenosine(1618) in 23S rRNA + S-adenosyl-L-homocysteine + H(+). In terms of biological role, specifically methylates the adenine in position 1618 of 23S rRNA. This chain is Ribosomal RNA large subunit methyltransferase F, found in Enterobacter sp. (strain 638).